Here is a 294-residue protein sequence, read N- to C-terminus: Acetyl-coenzyme A carboxylase carboxyl transferase subunit beta (294 aa).

Residues 25–294 form the CoA carboxyltransferase N-terminal domain; sequence VWTKCTACEQ…PFLEPEIIAD (270 aa). Residues C29, C32, C48, and C51 each contribute to the Zn(2+) site. The C4-type zinc-finger motif lies at 29–51; the sequence is CTACEQVLYRDELKRHLEVCPKC.

The protein belongs to the AccD/PCCB family. In terms of assembly, acetyl-CoA carboxylase is a heterohexamer composed of biotin carboxyl carrier protein (AccB), biotin carboxylase (AccC) and two subunits each of ACCase subunit alpha (AccA) and ACCase subunit beta (AccD). Zn(2+) serves as cofactor.

It localises to the cytoplasm. It catalyses the reaction N(6)-carboxybiotinyl-L-lysyl-[protein] + acetyl-CoA = N(6)-biotinyl-L-lysyl-[protein] + malonyl-CoA. Its pathway is lipid metabolism; malonyl-CoA biosynthesis; malonyl-CoA from acetyl-CoA: step 1/1. Component of the acetyl coenzyme A carboxylase (ACC) complex. Biotin carboxylase (BC) catalyzes the carboxylation of biotin on its carrier protein (BCCP) and then the CO(2) group is transferred by the transcarboxylase to acetyl-CoA to form malonyl-CoA. This chain is Acetyl-coenzyme A carboxylase carboxyl transferase subunit beta, found in Actinobacillus succinogenes (strain ATCC 55618 / DSM 22257 / CCUG 43843 / 130Z).